The following is a 37-amino-acid chain: MKVRASVKKLCRNCKVVKREGVVRVICSDPKHKQRQG.

It belongs to the bacterial ribosomal protein bL36 family.

The chain is Large ribosomal subunit protein bL36A from Actinobacillus pleuropneumoniae serotype 3 (strain JL03).